The sequence spans 112 residues: MGYRKLGRPSDQRRAMLRNLVTDFLKYGRITTTEARAKEVRSISEKMITLGKRGDLHARRQALAYILDESVVKKLFDEIAPKYKDRQGGYTRILKLGPRRGDGAPLVIIELV.

It belongs to the bacterial ribosomal protein bL17 family. Part of the 50S ribosomal subunit. Contacts protein L32.

The protein is Large ribosomal subunit protein bL17 of Thermoanaerobacter pseudethanolicus (strain ATCC 33223 / 39E) (Clostridium thermohydrosulfuricum).